The following is a 618-amino-acid chain: UvrABC system protein C (618 aa).

Positions 20–98 (TAPGVYRMYA…IKSLSPRYNV (79 aa)) constitute a GIY-YIG domain. Residues 207–242 (DQLGEEIMHSMQQASEALEFERAARLRDLLSSLRSM) form the UVR domain.

This sequence belongs to the UvrC family. In terms of assembly, interacts with UvrB in an incision complex.

It is found in the cytoplasm. In terms of biological role, the UvrABC repair system catalyzes the recognition and processing of DNA lesions. UvrC both incises the 5' and 3' sides of the lesion. The N-terminal half is responsible for the 3' incision and the C-terminal half is responsible for the 5' incision. The chain is UvrABC system protein C from Xanthomonas campestris pv. campestris (strain B100).